The primary structure comprises 100 residues: Urease subunit gamma (100 aa).

The protein belongs to the urease gamma subunit family. In terms of assembly, heterotrimer of UreA (gamma), UreB (beta) and UreC (alpha) subunits. Three heterotrimers associate to form the active enzyme.

Its subcellular location is the cytoplasm. The enzyme catalyses urea + 2 H2O + H(+) = hydrogencarbonate + 2 NH4(+). Its pathway is nitrogen metabolism; urea degradation; CO(2) and NH(3) from urea (urease route): step 1/1. The sequence is that of Urease subunit gamma from Paraburkholderia phytofirmans (strain DSM 17436 / LMG 22146 / PsJN) (Burkholderia phytofirmans).